The following is a 61-amino-acid chain: MSEKKIKITQVRSIIGGTRKQKATIQALGLGRPNYSVEKKDNACTKGQIRVVQHLVKVEEV.

The protein belongs to the universal ribosomal protein uL30 family. In terms of assembly, part of the 50S ribosomal subunit.

The polypeptide is Large ribosomal subunit protein uL30 (Chlorobium phaeovibrioides (strain DSM 265 / 1930) (Prosthecochloris vibrioformis (strain DSM 265))).